A 446-amino-acid polypeptide reads, in one-letter code: Tripartite motif-containing protein 43C (446 aa).

Residues 16 to 57 (CSICQGIFMDPVYLRCGHKFCETCLLLFQEDIKFPAYCPTCR) form an RING-type zinc finger. The segment at 88–129 (SEEHKCVTHKAKKMIFCDKSKILLCHLCSDSQEHSGHTHCSI) adopts a B box-type zinc-finger fold. Residues Cys-93, His-96, Cys-115, and His-121 each coordinate Zn(2+). The B30.2/SPRY domain maps to 271-446 (RLRAHSIPGL…VRPFFFAAYT (176 aa)).

This sequence belongs to the TRIM/RBCC family.

This chain is Tripartite motif-containing protein 43C, found in Mus musculus (Mouse).